Consider the following 356-residue polypeptide: Chorismate synthase (356 aa).

NADP(+) contacts are provided by Arg-44 and Arg-49. Residues 121 to 123, Gly-278, 293 to 297, and Arg-320 each bind FMN; these read HFS and KPTPS.

The protein belongs to the chorismate synthase family. FMNH2 serves as cofactor.

The catalysed reaction is 5-O-(1-carboxyvinyl)-3-phosphoshikimate = chorismate + phosphate. Its pathway is metabolic intermediate biosynthesis; chorismate biosynthesis; chorismate from D-erythrose 4-phosphate and phosphoenolpyruvate: step 7/7. Functionally, catalyzes the anti-1,4-elimination of the C-3 phosphate and the C-6 proR hydrogen from 5-enolpyruvylshikimate-3-phosphate (EPSP) to yield chorismate, which is the branch point compound that serves as the starting substrate for the three terminal pathways of aromatic amino acid biosynthesis. This reaction introduces a second double bond into the aromatic ring system. This is Chorismate synthase from Thermococcus gammatolerans (strain DSM 15229 / JCM 11827 / EJ3).